A 312-amino-acid polypeptide reads, in one-letter code: DNA-directed RNA polymerase subunit alpha (312 aa).

The interval 1–226 (MIEFKKPNIT…EHFKAFESAD (226 aa)) is alpha N-terminal domain (alpha-NTD). The tract at residues 243–312 (KEKKLEMTIE…DLGLSLRQED (70 aa)) is alpha C-terminal domain (alpha-CTD).

This sequence belongs to the RNA polymerase alpha chain family. Homodimer. The RNAP catalytic core consists of 2 alpha, 1 beta, 1 beta' and 1 omega subunit. When a sigma factor is associated with the core the holoenzyme is formed, which can initiate transcription.

The catalysed reaction is RNA(n) + a ribonucleoside 5'-triphosphate = RNA(n+1) + diphosphate. In terms of biological role, DNA-dependent RNA polymerase catalyzes the transcription of DNA into RNA using the four ribonucleoside triphosphates as substrates. In Lactobacillus delbrueckii subsp. bulgaricus (strain ATCC 11842 / DSM 20081 / BCRC 10696 / JCM 1002 / NBRC 13953 / NCIMB 11778 / NCTC 12712 / WDCM 00102 / Lb 14), this protein is DNA-directed RNA polymerase subunit alpha.